The sequence spans 369 residues: UPF0284 protein cce_1085 (369 aa).

It belongs to the UPF0284 family.

In Crocosphaera subtropica (strain ATCC 51142 / BH68) (Cyanothece sp. (strain ATCC 51142)), this protein is UPF0284 protein cce_1085.